Reading from the N-terminus, the 260-residue chain is Hemin import ATP-binding protein HmuV (260 aa).

The region spanning 2 to 239 is the ABC transporter domain; the sequence is IRAENITLIR…ETIARVYGIG (238 aa). 34-41 contributes to the ATP binding site; the sequence is GPNGAGKS.

Belongs to the ABC transporter superfamily. Heme (hemin) importer (TC 3.A.1.14.5) family. As to quaternary structure, the complex is composed of two ATP-binding proteins (HmuV), two transmembrane proteins (HmuU) and a solute-binding protein (HmuT).

It is found in the cell inner membrane. Functionally, part of the ABC transporter complex HmuTUV involved in hemin import. Responsible for energy coupling to the transport system. This Agrobacterium fabrum (strain C58 / ATCC 33970) (Agrobacterium tumefaciens (strain C58)) protein is Hemin import ATP-binding protein HmuV.